The chain runs to 350 residues: Ketol-acid reductoisomerase (NADP(+)) 2 (350 aa).

Residues 3–183 (ATIWYEKDAD…GALRAGAIKT (181 aa)) enclose the KARI N-terminal Rossmann domain. NADP(+) contacts are provided by residues 26–29 (YGSQ), R49, S52, S54, and 84–87 (DQYQ). Residue H109 is part of the active site. G135 serves as a coordination point for NADP(+). A KARI C-terminal knotted domain is found at 184–327 (TFTEETETDL…PKLRAMFSWN (144 aa)). Mg(2+)-binding residues include D192, E196, E228, and E232. Residue S253 participates in substrate binding. Residues 331–350 (AKDKDETESFNGKIARTQVQ) are disordered.

This sequence belongs to the ketol-acid reductoisomerase family. Mg(2+) serves as cofactor.

It carries out the reaction (2R)-2,3-dihydroxy-3-methylbutanoate + NADP(+) = (2S)-2-acetolactate + NADPH + H(+). It catalyses the reaction (2R,3R)-2,3-dihydroxy-3-methylpentanoate + NADP(+) = (S)-2-ethyl-2-hydroxy-3-oxobutanoate + NADPH + H(+). The protein operates within amino-acid biosynthesis; L-isoleucine biosynthesis; L-isoleucine from 2-oxobutanoate: step 2/4. It functions in the pathway amino-acid biosynthesis; L-valine biosynthesis; L-valine from pyruvate: step 2/4. In terms of biological role, involved in the biosynthesis of branched-chain amino acids (BCAA). Catalyzes an alkyl-migration followed by a ketol-acid reduction of (S)-2-acetolactate (S2AL) to yield (R)-2,3-dihydroxy-isovalerate. In the isomerase reaction, S2AL is rearranged via a Mg-dependent methyl migration to produce 3-hydroxy-3-methyl-2-ketobutyrate (HMKB). In the reductase reaction, this 2-ketoacid undergoes a metal-dependent reduction by NADPH to yield (R)-2,3-dihydroxy-isovalerate. In Bifidobacterium longum (strain NCC 2705), this protein is Ketol-acid reductoisomerase (NADP(+)) 2.